A 226-amino-acid chain; its full sequence is Ribonuclease 3 (226 aa).

Residues 7–129 (LARLSRTLGY…IIGAVYLDAN (123 aa)) enclose the RNase III domain. Glutamate 42 is a binding site for Mg(2+). The active site involves aspartate 46. Residues aspartate 115 and glutamate 118 each coordinate Mg(2+). Residue glutamate 118 is part of the active site. A DRBM domain is found at 156 to 226 (DPKTILQEYL…AAQILELINK (71 aa)).

This sequence belongs to the ribonuclease III family. In terms of assembly, homodimer. The cofactor is Mg(2+).

The protein localises to the cytoplasm. The enzyme catalyses Endonucleolytic cleavage to 5'-phosphomonoester.. Its function is as follows. Digests double-stranded RNA. Involved in the processing of primary rRNA transcript to yield the immediate precursors to the large and small rRNAs (23S and 16S). Processes some mRNAs, and tRNAs when they are encoded in the rRNA operon. Processes pre-crRNA and tracrRNA of type II CRISPR loci if present in the organism. The protein is Ribonuclease 3 of Shewanella denitrificans (strain OS217 / ATCC BAA-1090 / DSM 15013).